The chain runs to 519 residues: 2-isopropylmalate synthase (519 aa).

The Pyruvate carboxyltransferase domain maps to 5–267; sequence VIIFDTTLRD…YTNIHHHEIY (263 aa). Mn(2+)-binding residues include Asp-14, His-202, His-204, and Asn-238. Residues 392–519 are regulatory domain; it reads ALESFHIHST…NHKNTQHIKK (128 aa).

Belongs to the alpha-IPM synthase/homocitrate synthase family. LeuA type 1 subfamily. Homodimer. Mn(2+) serves as cofactor.

It localises to the cytoplasm. The catalysed reaction is 3-methyl-2-oxobutanoate + acetyl-CoA + H2O = (2S)-2-isopropylmalate + CoA + H(+). The protein operates within amino-acid biosynthesis; L-leucine biosynthesis; L-leucine from 3-methyl-2-oxobutanoate: step 1/4. In terms of biological role, catalyzes the condensation of the acetyl group of acetyl-CoA with 3-methyl-2-oxobutanoate (2-ketoisovalerate) to form 3-carboxy-3-hydroxy-4-methylpentanoate (2-isopropylmalate). The chain is 2-isopropylmalate synthase from Blochmanniella floridana.